Consider the following 192-residue polypeptide: Elongation factor P (192 aa).

It belongs to the elongation factor P family.

Its subcellular location is the cytoplasm. The protein operates within protein biosynthesis; polypeptide chain elongation. Its function is as follows. Involved in peptide bond synthesis. Stimulates efficient translation and peptide-bond synthesis on native or reconstituted 70S ribosomes in vitro. Probably functions indirectly by altering the affinity of the ribosome for aminoacyl-tRNA, thus increasing their reactivity as acceptors for peptidyl transferase. This chain is Elongation factor P, found in Borreliella afzelii (strain PKo) (Borrelia afzelii).